The following is a 542-amino-acid chain: Neurofilament light polypeptide (542 aa).

S2 carries the N-acetylserine modification. The tract at residues 2-93 (SSFSYEPYFS…KSIRTQEKAQ (92 aa)) is head. An O-linked (GlcNAc) threonine glycan is attached at T21. Residue R23 is modified to Asymmetric dimethylarginine; alternate. Residue R23 is modified to Omega-N-methylarginine; alternate. An O-linked (GlcNAc) serine glycan is attached at S27. R30 carries the omega-N-methylarginine modification. Residue Y43 is modified to Phosphotyrosine. 3 positions are modified to phosphoserine: S56, S67, and S103. Residues 90–401 (EKAQLQDLND…KLLEGEETRL (312 aa)) enclose the IF rod domain. The segment at 94–125 (LQDLNDRFASFIERVHELEQQNKVLEAELLVL) is coil 1A. Residues 126–138 (RQKHSEPSRFRAL) form a linker 1 region. The coil 1B stretch occupies residues 139 to 234 (YEQEIRDLRL…KVHEEEIAEL (96 aa)). Positions 235–253 (QAQIQYAQISVEMDVSSKP) are linker 12. The tract at residues 254–272 (DLSAALKDIRAQYEKLAAK) is coil 2A. The segment at 273–281 (NMQNAEEWF) is linker 2. The coil 2B stretch occupies residues 282–397 (KSRFTVLTES…AAYRKLLEGE (116 aa)). The tract at residues 382-392 (ALDIEIAAYRK) is epitope; recognized by IF-specific monoclonal antibody. The tract at residues 398–444 (ETRLSFTSVGSITSGYSQSSQVFGRSAYSGLQSSSYLMSARAFPAYY) is tail, subdomain A. A tail region spans residues 398–542 (ETRLSFTSVG…GEEQAAKKKD (145 aa)). The tail, subdomain B (acidic) stretch occupies residues 445–542 (TSHVQEEQSE…GEEQAAKKKD (98 aa)). The interval 451 to 542 (EQSEVEETIE…GEEQAAKKKD (92 aa)) is disordered. S453 is subject to Phosphoserine. Residues 460-471 (EATKAEEAKDEP) are compositionally biased toward basic and acidic residues. Residues 472 to 527 (PSEGEAEEEEKEKEEGEEEEGAEEEEAAKDESEDAKEEEGGEGEEEDTKESEEEEK) are compositionally biased toward acidic residues. S473 and S503 each carry phosphoserine. At T519 the chain carries Phosphothreonine. Phosphoserine occurs at positions 522 and 531. Residues 528–542 (KEESAGEEQAAKKKD) show a composition bias toward basic and acidic residues.

This sequence belongs to the intermediate filament family. In terms of assembly, forms homodimers (in vitro). Forms heterodimers with NEFH or NEFM; which can further hetero-oligomerize (in vitro). Forms heterodimers with INA (in vitro). Interacts with ARHGEF28. Interacts with TRIM2. In terms of processing, O-glycosylated; contains three N-acetylglucosamine side chains. Post-translationally, phosphorylated in the head and rod regions by the PKC kinase PKN1, leading to the inhibition of polymerization. Ubiquitinated in the presence of TRIM2 and UBE2D1. In terms of tissue distribution, expressed in the dorsal root ganglion neurons (at protein level).

The protein resides in the cell projection. The protein localises to the axon. It is found in the cytoplasm. Its subcellular location is the cytoskeleton. Functionally, neurofilaments usually contain three intermediate filament proteins: NEFL, NEFM, and NEFH which are involved in the maintenance of neuronal caliber. May additionally cooperate with the neuronal intermediate filament proteins PRPH and INA to form neuronal filamentous networks. This is Neurofilament light polypeptide (Nefl) from Rattus norvegicus (Rat).